The primary structure comprises 337 residues: Heat-inducible transcription repressor HrcA (337 aa).

This sequence belongs to the HrcA family.

Its function is as follows. Negative regulator of class I heat shock genes (grpE-dnaK-dnaJ and groELS operons). Prevents heat-shock induction of these operons. In Metamycoplasma arthritidis (strain 158L3-1) (Mycoplasma arthritidis), this protein is Heat-inducible transcription repressor HrcA.